The chain runs to 303 residues: Probable cell division protein WhiA (303 aa).

Positions 272–303 form a DNA-binding region, H-T-H motif; sequence SIQQIADSLETPLSKSGVNHRLRKINKIADEL.

The protein belongs to the WhiA family.

In terms of biological role, involved in cell division and chromosome segregation. This is Probable cell division protein WhiA from Streptococcus agalactiae serotype Ia (strain ATCC 27591 / A909 / CDC SS700).